The chain runs to 470 residues: Poly(A) polymerase catalytic subunit (470 aa).

Catalysis depends on residues D192 and D194.

This sequence belongs to the poxviridae poly(A) polymerase catalytic subunit family. Heterodimer of a large (catalytic) subunit and a small (regulatory) subunit.

It catalyses the reaction RNA(n) + ATP = RNA(n)-3'-adenine ribonucleotide + diphosphate. Functionally, polymerase that creates the 3'-poly(A) tail of mRNA's. The sequence is that of Poly(A) polymerase catalytic subunit (PAPL) from Myxoma virus (strain Lausanne) (MYXV).